We begin with the raw amino-acid sequence, 416 residues long: UDP-N-acetylglucosamine 1-carboxyvinyltransferase (416 aa).

A phosphoenolpyruvate-binding site is contributed by 22 to 23 (KN). Arg91 contacts UDP-N-acetyl-alpha-D-glucosamine. The active-site Proton donor is the Cys115. A 2-(S-cysteinyl)pyruvic acid O-phosphothioketal modification is found at Cys115. UDP-N-acetyl-alpha-D-glucosamine-binding positions include 120 to 124 (RPIDL), Asp305, and Ile327.

This sequence belongs to the EPSP synthase family. MurA subfamily.

The protein resides in the cytoplasm. It catalyses the reaction phosphoenolpyruvate + UDP-N-acetyl-alpha-D-glucosamine = UDP-N-acetyl-3-O-(1-carboxyvinyl)-alpha-D-glucosamine + phosphate. The protein operates within cell wall biogenesis; peptidoglycan biosynthesis. Its function is as follows. Cell wall formation. Adds enolpyruvyl to UDP-N-acetylglucosamine. The chain is UDP-N-acetylglucosamine 1-carboxyvinyltransferase from Buchnera aphidicola subsp. Acyrthosiphon pisum (strain Tuc7).